Here is a 194-residue protein sequence, read N- to C-terminus: Adenylate kinase (194 aa).

10–15 (GAGKGT) contacts ATP. The NMP stretch occupies residues 30–59 (STGDMLRAAVAQQSEIGKRAKAVMDAGQLV). AMP-binding positions include T31, R36, 57–59 (QLV), 85–88 (GYPR), and Q92. The LID stretch occupies residues 126-142 (SRVAETIAKGGQVRSDD). R127 lines the ATP pocket. 2 residues coordinate AMP: R139 and R150. Position 178 (A178) interacts with ATP.

The protein belongs to the adenylate kinase family. In terms of assembly, monomer.

Its subcellular location is the cytoplasm. It carries out the reaction AMP + ATP = 2 ADP. The protein operates within purine metabolism; AMP biosynthesis via salvage pathway; AMP from ADP: step 1/1. Catalyzes the reversible transfer of the terminal phosphate group between ATP and AMP. Plays an important role in cellular energy homeostasis and in adenine nucleotide metabolism. This Brucella canis (strain ATCC 23365 / NCTC 10854 / RM-666) protein is Adenylate kinase.